Here is a 104-residue protein sequence, read N- to C-terminus: Iron-sulfur cluster assembly protein CyaY (104 aa).

The protein belongs to the frataxin family.

Its function is as follows. Involved in iron-sulfur (Fe-S) cluster assembly. May act as a regulator of Fe-S biogenesis. The protein is Iron-sulfur cluster assembly protein CyaY of Aliivibrio fischeri (strain MJ11) (Vibrio fischeri).